We begin with the raw amino-acid sequence, 92 residues long: Small ribosomal subunit protein uS19c (92 aa).

The protein belongs to the universal ribosomal protein uS19 family.

It is found in the plastid. The protein localises to the chloroplast. In terms of biological role, protein S19 forms a complex with S13 that binds strongly to the 16S ribosomal RNA. In Tupiella akineta (Green alga), this protein is Small ribosomal subunit protein uS19c.